We begin with the raw amino-acid sequence, 56 residues long: Small ribosomal subunit protein uS14 (56 aa).

Positions 21, 24, 39, and 42 each coordinate Zn(2+).

It belongs to the universal ribosomal protein uS14 family. Component of the 40S small ribosomal subunit. Zn(2+) serves as cofactor.

Its subcellular location is the cytoplasm. The protein resides in the cytosol. It is found in the rough endoplasmic reticulum. In Spodoptera frugiperda (Fall armyworm), this protein is Small ribosomal subunit protein uS14 (RpS29).